We begin with the raw amino-acid sequence, 319 residues long: Vomeronasal type-1 receptor 51 (319 aa).

Residues 1–31 are Extracellular-facing; it reads MNEILFFSPQPLFSHMMNENSRVHTHSNLRH. Residues 32-52 traverse the membrane as a helical segment; sequence IFFSEIGIGISGNSFLLLFHI. The Cytoplasmic portion of the chain corresponds to 53-65; the sequence is LKFIHGHRSRLSD. A helical transmembrane segment spans residues 66–86; the sequence is LPIGLLSLIHLLMLLVMAFIA. At 87 to 109 the chain is on the extracellular side; the sequence is TDIFISWRGWDDIICKFLVYLYR. Cys-101 and Cys-188 are joined by a disulfide. A helical membrane pass occupies residues 110–130; the sequence is VLRGLSLCTTSMLSVLQAIIL. The Cytoplasmic segment spans residues 131-150; that stretch reads SPRSSCLAKFKRKSLHHISC. Residues 151–171 form a helical membrane-spanning segment; it reads AILFLSVLYMLIGSQLLVSII. Over 172-203 the chain is Extracellular; the sequence is ATPNLTTNDFIYVTQSCSILPLSYVMQSMFST. Asn-175 carries an N-linked (GlcNAc...) asparagine glycan. A helical transmembrane segment spans residues 204-224; it reads LLVIRDVFLISLMVLSTWYMV. Topologically, residues 225-254 are cytoplasmic; the sequence is ALLCRHRKKTQHLQGISLSPKTSPKQRATQ. A helical membrane pass occupies residues 255-275; the sequence is TLLMLMSFFVLMTIYDTIVSC. The Extracellular portion of the chain corresponds to 276 to 285; that stretch reads SRTMFLNDPT. The chain crosses the membrane as a helical span at residues 286–306; it reads SYNMQIFVVHIYATVSPFVFM. Residues 307 to 319 lie on the Cytoplasmic side of the membrane; that stretch reads STEKHIVNCLRSV.

Belongs to the G-protein coupled receptor 1 family. In terms of tissue distribution, expressed in a subset of sensory neurons located in the apical layer of the vomeronasal organ.

The protein resides in the cell membrane. In terms of biological role, putative pheromone receptor implicated in the regulation of social as well as reproductive behavior. This is Vomeronasal type-1 receptor 51 (Vmn1r51) from Mus musculus (Mouse).